The following is a 326-amino-acid chain: Undecaprenyl-phosphate 4-deoxy-4-formamido-L-arabinose transferase (326 aa).

2 consecutive transmembrane segments (helical) span residues 235-255 (MLSVIGSMIALLGFAFSLLLI) and 270-290 (VFMLFAVLFIFIGAQFIGMGL).

Belongs to the glycosyltransferase 2 family.

The protein resides in the cell inner membrane. The catalysed reaction is UDP-4-deoxy-4-formamido-beta-L-arabinose + di-trans,octa-cis-undecaprenyl phosphate = 4-deoxy-4-formamido-alpha-L-arabinopyranosyl di-trans,octa-cis-undecaprenyl phosphate + UDP. Its pathway is glycolipid biosynthesis; 4-amino-4-deoxy-alpha-L-arabinose undecaprenyl phosphate biosynthesis; 4-amino-4-deoxy-alpha-L-arabinose undecaprenyl phosphate from UDP-4-deoxy-4-formamido-beta-L-arabinose and undecaprenyl phosphate: step 1/2. It participates in bacterial outer membrane biogenesis; lipopolysaccharide biosynthesis. Catalyzes the transfer of 4-deoxy-4-formamido-L-arabinose from UDP to undecaprenyl phosphate. The modified arabinose is attached to lipid A and is required for resistance to polymyxin and cationic antimicrobial peptides. This chain is Undecaprenyl-phosphate 4-deoxy-4-formamido-L-arabinose transferase, found in Sodalis glossinidius (strain morsitans).